Consider the following 354-residue polypeptide: Anthranilate phosphoribosyltransferase (354 aa).

5-phospho-alpha-D-ribose 1-diphosphate contacts are provided by residues glycine 94, 97–98, threonine 102, 104–107, 122–130, and serine 134; these read GD, NIST, and KHGNRAASS. Residue glycine 94 participates in anthranilate binding. Serine 106 contributes to the Mg(2+) binding site. Residue asparagine 125 coordinates anthranilate. Arginine 180 contributes to the anthranilate binding site. Residues aspartate 238 and glutamate 239 each contribute to the Mg(2+) site.

This sequence belongs to the anthranilate phosphoribosyltransferase family. As to quaternary structure, homodimer. The cofactor is Mg(2+).

The catalysed reaction is N-(5-phospho-beta-D-ribosyl)anthranilate + diphosphate = 5-phospho-alpha-D-ribose 1-diphosphate + anthranilate. It participates in amino-acid biosynthesis; L-tryptophan biosynthesis; L-tryptophan from chorismate: step 2/5. Its function is as follows. Catalyzes the transfer of the phosphoribosyl group of 5-phosphorylribose-1-pyrophosphate (PRPP) to anthranilate to yield N-(5'-phosphoribosyl)-anthranilate (PRA). This chain is Anthranilate phosphoribosyltransferase, found in Streptomyces griseus subsp. griseus (strain JCM 4626 / CBS 651.72 / NBRC 13350 / KCC S-0626 / ISP 5235).